The sequence spans 743 residues: Inhibitor of nuclear factor kappa-B kinase subunit alpha (743 aa).

A Protein kinase domain is found at W15 to V300. ATP is bound by residues L21–V29 and K44. D144 (proton acceptor) is an active-site residue. Residues L453–L474 are leucine-zipper. The segment at L736–L741 is NEMO-binding.

It belongs to the protein kinase superfamily. Ser/Thr protein kinase family. I-kappa-B kinase subfamily.

It localises to the cytoplasm. It is found in the nucleus. The enzyme catalyses L-seryl-[I-kappa-B protein] + ATP = O-phospho-L-seryl-[I-kappa-B protein] + ADP + H(+). With respect to regulation, activated when phosphorylated and inactivated when dephosphorylated. Its function is as follows. Phosphorylates inhibitors of NF-kappa-B thus leading to the dissociation of the inhibitor/NF-kappa-B complex and ultimately the degradation of the inhibitor. Phosphorylates 'Ser-10' of histone H3 at NF-kappa-B-regulated promoters during inflammatory responses triggered by cytokines. The sequence is that of Inhibitor of nuclear factor kappa-B kinase subunit alpha (chuk) from Xenopus tropicalis (Western clawed frog).